Here is a 251-residue protein sequence, read N- to C-terminus: MKAFEFLYEDFQRGLTVVLDKGLPPKFVEDYLKVCGDYIDFVKFGWGTSAVIDRDVVKEKINYYKDWGIKVYPGGTLFEYAYSKGKFDEFLNECEKLGFEAVEISDGSSDISLEERKNAIKRAKDNGFMVLTEVGKKMPDKDKQLTIDDRIKLINFDLDAGADYVIIEGRESGKGIGLFDKEGKVKENELDVLAKNVDINKVIFEAPQKSQQVAFILKFGSSVNLANIAFDEVISLETLRRGLRGDTFGKV.

Belongs to the phosphosulfolactate synthase family. In terms of assembly, homotrimer. The cofactor is Mg(2+).

The catalysed reaction is (2R)-O-phospho-3-sulfolactate = phosphoenolpyruvate + sulfite + H(+). The protein operates within cofactor biosynthesis; coenzyme M biosynthesis; sulfoacetaldehyde from phosphoenolpyruvate and sulfite: step 1/4. In terms of biological role, catalyzes the addition of sulfite to phosphoenolpyruvate (PEP) to yield (2R)-phospho-3-sulfolactate (PSL). The chain is Phosphosulfolactate synthase (comA) from Methanocaldococcus jannaschii (strain ATCC 43067 / DSM 2661 / JAL-1 / JCM 10045 / NBRC 100440) (Methanococcus jannaschii).